We begin with the raw amino-acid sequence, 305 residues long: Olfactory receptor 4F5 (305 aa).

Residues 1–18 (MVTEFIFLGLSDSQELQT) are Extracellular-facing. The helical transmembrane segment at 19 to 42 (FLFMLFFVFYGGIVFGNLLIVITV) threads the bilayer. Residues 43–50 (VSDSHLHS) lie on the Cytoplasmic side of the membrane. Residues 51-72 (PMYFLLANLSLIDLSLSSVTAP) form a helical membrane-spanning segment. Residues 73 to 93 (KMITDFFSQRKVISFKGCLVQ) are Extracellular-facing. Cysteine 90 and cysteine 182 form a disulfide bridge. The chain crosses the membrane as a helical span at residues 94–113 (IFLLHFFGGSEMVILIAMGF). At 114–132 (DRYIAICKPLHYTTIMCGN) the chain is on the cytoplasmic side. A helical membrane pass occupies residues 133–151 (ACVGIMAVTWGIGFLHSVS). Over 152-188 (QLAFAVHLLFCGPNEVDSFYCDLPRVIKLACTDTYRL) the chain is Extracellular. A helical membrane pass occupies residues 189-212 (DIMVIANSGVLTVCSFVLLIISYT). Topologically, residues 213-228 (IILMTIQHRPLDKSSK) are cytoplasmic. A helical membrane pass occupies residues 229–251 (ALSTLTAHITVVLLFFGPCVFIY). Residues 252–262 (AWPFPIKSLDK) lie on the Extracellular side of the membrane. Residues 263 to 282 (FLAVFYSVITPLLNPIIYTL) form a helical membrane-spanning segment. The Cytoplasmic portion of the chain corresponds to 283 to 305 (RNKDMKTAIRQLRKWDAHSSVKF).

It belongs to the G-protein coupled receptor 1 family.

The protein localises to the cell membrane. In terms of biological role, odorant receptor. This chain is Olfactory receptor 4F5 (OR4F5), found in Homo sapiens (Human).